The primary structure comprises 614 residues: 1-deoxy-D-xylulose-5-phosphate synthase (614 aa).

Thiamine diphosphate contacts are provided by residues His-76 and 117 to 119; that span reads GHS. Asp-148 contributes to the Mg(2+) binding site. Thiamine diphosphate contacts are provided by residues 149–150, Asn-177, Tyr-285, and Glu-366; that span reads GA. Asn-177 contacts Mg(2+).

The protein belongs to the transketolase family. DXPS subfamily. In terms of assembly, homodimer. It depends on Mg(2+) as a cofactor. Requires thiamine diphosphate as cofactor.

It catalyses the reaction D-glyceraldehyde 3-phosphate + pyruvate + H(+) = 1-deoxy-D-xylulose 5-phosphate + CO2. It participates in metabolic intermediate biosynthesis; 1-deoxy-D-xylulose 5-phosphate biosynthesis; 1-deoxy-D-xylulose 5-phosphate from D-glyceraldehyde 3-phosphate and pyruvate: step 1/1. Functionally, catalyzes the acyloin condensation reaction between C atoms 2 and 3 of pyruvate and glyceraldehyde 3-phosphate to yield 1-deoxy-D-xylulose-5-phosphate (DXP). This is 1-deoxy-D-xylulose-5-phosphate synthase from Pasteurella multocida (strain Pm70).